Consider the following 192-residue polypeptide: NADH-quinone oxidoreductase subunit C (192 aa).

Residues 170 to 192 (LGGIPVEYKGATVPPPDERRQYA) form a disordered region.

This sequence belongs to the complex I 30 kDa subunit family. As to quaternary structure, NDH-1 is composed of 14 different subunits. Subunits NuoB, C, D, E, F, and G constitute the peripheral sector of the complex.

It localises to the cell membrane. It catalyses the reaction a quinone + NADH + 5 H(+)(in) = a quinol + NAD(+) + 4 H(+)(out). Its function is as follows. NDH-1 shuttles electrons from NADH, via FMN and iron-sulfur (Fe-S) centers, to quinones in the respiratory chain. The immediate electron acceptor for the enzyme in this species is believed to be a menaquinone. Couples the redox reaction to proton translocation (for every two electrons transferred, four hydrogen ions are translocated across the cytoplasmic membrane), and thus conserves the redox energy in a proton gradient. This is NADH-quinone oxidoreductase subunit C from Acidothermus cellulolyticus (strain ATCC 43068 / DSM 8971 / 11B).